Consider the following 118-residue polypeptide: Large ribosomal subunit protein bL20 (118 aa).

Belongs to the bacterial ribosomal protein bL20 family.

Functionally, binds directly to 23S ribosomal RNA and is necessary for the in vitro assembly process of the 50S ribosomal subunit. It is not involved in the protein synthesizing functions of that subunit. The sequence is that of Large ribosomal subunit protein bL20 from Hahella chejuensis (strain KCTC 2396).